A 351-amino-acid polypeptide reads, in one-letter code: dTDP-glucose 4,6-dehydratase (351 aa).

NAD(+) is bound by residues 12 to 13 (FI), 32 to 35 (DALT), 58 to 59 (DI), 80 to 84 (FAAES), and T99. A substrate-binding site is contributed by S84. A substrate-binding site is contributed by T133. D134 serves as the catalytic Proton donor. Catalysis depends on proton acceptor residues E135 and Y158. 158–162 (YSASK) serves as a coordination point for NAD(+). Residue N187 participates in substrate binding. Residue N188 participates in NAD(+) binding. Substrate-binding positions include 197–198 (KL), 213–215 (PVY), R222, N257, and 289–293 (DRPGH).

The protein belongs to the NAD(P)-dependent epimerase/dehydratase family. dTDP-glucose dehydratase subfamily. Homodimer. The cofactor is NAD(+).

The enzyme catalyses dTDP-alpha-D-glucose = dTDP-4-dehydro-6-deoxy-alpha-D-glucose + H2O. Its pathway is carbohydrate biosynthesis; dTDP-L-rhamnose biosynthesis. It functions in the pathway bacterial outer membrane biogenesis; LPS O-antigen biosynthesis. Functionally, catalyzes the dehydration of dTDP-D-glucose to form dTDP-6-deoxy-D-xylo-4-hexulose via a three-step process involving oxidation, dehydration and reduction. This is dTDP-glucose 4,6-dehydratase (rfbB) from Xanthomonas campestris pv. campestris (strain B100).